The following is a 447-amino-acid chain: MDLSAAAALCLWLLSACRPRDGLEAAAVLRAAGAGPVRSPGGGGGGGRTLAQAAGAAAVPAAAVSRARAPRRAAGSGFRNGSVVPHHFMMSLYRSLAGRAPAGAVAVSSSGHGRADTITGFTDQATQDESAAETGQSFLFDVSSLNDADEVVGAELRVLRRGSPEPGPGSSTSPPLLLLSTCPGAARAPRLLYSRAAEPLVGQRWEVFDVADAMRRHRREPRPPRAFCLLLRAVTGPVRSPLALRRLGFGWPGGGGSAPEERALLVVSSRTQRKESLFREMRAQARALGAALAAQPPPDPGTGTGSPRAVTAGRRRRRTALAGTRTAQGSGGGAGRGHGRRGRSRCSRKPLHVDFKELGWDDWIIAPLDYEAYHCEGVCDFPLRSHLEPTNHAIIQTLLNSMAPDAAPASCCVPARLSPISILYIDAANNVVYKQYEDMVVEACGCR.

Residues methionine 1 to proline 19 form the signal peptide. The propeptide occupies arginine 20 to arginine 318. N-linked (GlcNAc...) asparagine glycosylation is present at asparagine 80. The disordered stretch occupies residues leucine 292–cysteine 346. Basic residues predominate over residues glycine 337–cysteine 346. Disulfide bonds link cysteine 346–cysteine 412, cysteine 375–cysteine 444, and cysteine 379–cysteine 446.

The protein belongs to the TGF-beta family. As to quaternary structure, homodimer; disulfide-linked. In terms of tissue distribution, highly expressed in the primary aera of brain neocortex.

It localises to the secreted. Functionally, may play an active role in the motor area of the primate neocortex. In Chlorocebus aethiops (Green monkey), this protein is Growth/differentiation factor 7 (GDF7).